The following is a 479-amino-acid chain: tRNA modification GTPase MnmE (479 aa).

(6S)-5-formyl-5,6,7,8-tetrahydrofolate-binding residues include R30, E91, and K130. One can recognise a TrmE-type G domain in the interval 226–402 (GFRIVLTGLP…VLKDLVKEFA (177 aa)). N236 provides a ligand contact to K(+). GTP is bound by residues 236–241 (NVGKSS), 255–261 (TDIPGTT), and 280–283 (DTAG). S240 serves as a coordination point for Mg(2+). Residues T255, I257, and T260 each contribute to the K(+) site. T261 serves as a coordination point for Mg(2+). (6S)-5-formyl-5,6,7,8-tetrahydrofolate is bound at residue K479.

It belongs to the TRAFAC class TrmE-Era-EngA-EngB-Septin-like GTPase superfamily. TrmE GTPase family. In terms of assembly, homodimer. Heterotetramer of two MnmE and two MnmG subunits. It depends on K(+) as a cofactor.

Its subcellular location is the cytoplasm. Its function is as follows. Exhibits a very high intrinsic GTPase hydrolysis rate. Involved in the addition of a carboxymethylaminomethyl (cmnm) group at the wobble position (U34) of certain tRNAs, forming tRNA-cmnm(5)s(2)U34. The chain is tRNA modification GTPase MnmE from Bdellovibrio bacteriovorus (strain ATCC 15356 / DSM 50701 / NCIMB 9529 / HD100).